The primary structure comprises 307 residues: Ribonuclease Z (307 aa).

Zn(2+) contacts are provided by His63, His65, Asp67, His68, His141, Asp212, and His270. Asp67 serves as the catalytic Proton acceptor.

Belongs to the RNase Z family. Homodimer. Zn(2+) serves as cofactor.

It catalyses the reaction Endonucleolytic cleavage of RNA, removing extra 3' nucleotides from tRNA precursor, generating 3' termini of tRNAs. A 3'-hydroxy group is left at the tRNA terminus and a 5'-phosphoryl group is left at the trailer molecule.. Zinc phosphodiesterase, which displays some tRNA 3'-processing endonuclease activity. Probably involved in tRNA maturation, by removing a 3'-trailer from precursor tRNA. This chain is Ribonuclease Z, found in Bacillus cereus (strain B4264).